The sequence spans 276 residues: NADPH-dependent 7-cyano-7-deazaguanine reductase (276 aa).

83–85 (IES) is a binding site for substrate. 85 to 86 (SK) serves as a coordination point for NADPH. Cysteine 184 serves as the catalytic Thioimide intermediate. Aspartate 191 (proton donor) is an active-site residue. Substrate is bound at residue 223 to 224 (HE). An NADPH-binding site is contributed by 252–253 (RG).

The protein belongs to the GTP cyclohydrolase I family. QueF type 2 subfamily. In terms of assembly, homodimer.

The protein resides in the cytoplasm. It catalyses the reaction 7-aminomethyl-7-carbaguanine + 2 NADP(+) = 7-cyano-7-deazaguanine + 2 NADPH + 3 H(+). It functions in the pathway tRNA modification; tRNA-queuosine biosynthesis. Its function is as follows. Catalyzes the NADPH-dependent reduction of 7-cyano-7-deazaguanine (preQ0) to 7-aminomethyl-7-deazaguanine (preQ1). In Pseudomonas fluorescens (strain SBW25), this protein is NADPH-dependent 7-cyano-7-deazaguanine reductase.